Consider the following 329-residue polypeptide: Cathepsin K (329 aa).

Residues 1 to 15 (MWVFKFLLLPMVSFA) form the signal peptide. Positions 16–114 (LSPEEMLDTQ…TLYTPEWEGR (99 aa)) are cleaved as a propeptide — activation peptide. Asn-103 is a glycosylation site (N-linked (GlcNAc...) asparagine). 2 disulfides stabilise this stretch: Cys-136-Cys-177 and Cys-170-Cys-210. Cys-139 is a catalytic residue. The N-linked (GlcNAc...) asparagine glycan is linked to Asn-213. Cys-269 and Cys-318 form a disulfide bridge. Catalysis depends on residues His-276 and Asn-296.

The protein belongs to the peptidase C1 family. In terms of tissue distribution, predominantly expressed in bones. Expressed in thyroid epithelial cells.

It is found in the lysosome. Its subcellular location is the secreted. The protein resides in the apical cell membrane. It carries out the reaction Broad proteolytic activity. With small-molecule substrates and inhibitors, the major determinant of specificity is P2, which is preferably Leu, Met &gt; Phe, and not Arg.. Functionally, thiol protease involved in osteoclastic bone resorption. Displays potent endoprotease activity against fibrinogen at acid pH. May play an important role in extracellular matrix degradation. Involved in the release of thyroid hormone thyroxine (T4) by limited proteolysis of TG/thyroglobulin in the thyroid follicle lumen. This Mus musculus (Mouse) protein is Cathepsin K (Ctsk).